Here is a 764-residue protein sequence, read N- to C-terminus: DNA polymerase 3 (764 aa).

The protein belongs to the DNA polymerase type-B family.

It carries out the reaction DNA(n) + a 2'-deoxyribonucleoside 5'-triphosphate = DNA(n+1) + diphosphate. This Saccharolobus solfataricus (strain ATCC 35092 / DSM 1617 / JCM 11322 / P2) (Sulfolobus solfataricus) protein is DNA polymerase 3 (dpo3).